Reading from the N-terminus, the 306-residue chain is Serine/threonine-protein phosphatase PP2A-2 catalytic subunit (306 aa).

4 residues coordinate Mn(2+): D54, H56, D82, and N114. The Proton donor role is filled by H115. Mn(2+) contacts are provided by H164 and H238. Position 306 is a leucine methyl ester (L306).

Belongs to the PPP phosphatase family. PP-2A subfamily. In terms of assembly, PP2A consists of a common heterodimeric core enzyme, composed of a 36 kDa catalytic subunit (subunit C) and a 65 kDa constant regulatory subunit (subunit A), that associates with a variety of regulatory subunits such as subunits B (the R2/B/PR55/B55, R3/B''/PR72/PR130/PR59 and R5/B'/B56 families). Interacts with B'THETA. Interacts with HDA14. Interacts with SRK2E/OST1. Interacts with TAP46. Requires Mn(2+) as cofactor. In terms of processing, reversibly methyl esterified on Leu-306 by leucine carboxyl methyltransferase 1 (LCMT1) and pectin methylesterase 1 (PME1). Carboxyl methylation influences the affinity of the catalytic subunit for the different regulatory subunits, thereby modulating the PP2A holoenzyme's substrate specificity, enzyme activity and cellular localization. Phosphorylation of either threonine (by autophosphorylation-activated protein kinase) or tyrosine results in inactivation of the phosphatase. Auto-dephosphorylation has been suggested as a mechanism for reactivation. In terms of tissue distribution, expressed in root meristem, emerging lateral roots, leaf vasculature, stipules, guard cells, anthers and pollen grains.

It is found in the cytoplasm. The protein resides in the cytosol. It localises to the nucleus. Its subcellular location is the peroxisome. It catalyses the reaction O-phospho-L-seryl-[protein] + H2O = L-seryl-[protein] + phosphate. It carries out the reaction O-phospho-L-threonyl-[protein] + H2O = L-threonyl-[protein] + phosphate. In terms of biological role, dephosphorylates and activates the actin-depolymerizing factor ADF1, which, in turn, regulates actin cytoskeleton remodeling and is involved in the blue light photoreceptor PHOT2-mediated chloroplast avoidance movements. Associates with the serine/threonine-protein phosphatase PP2A regulatory subunits A and B' to positively regulates beta-oxidation of fatty acids and protoauxins in peroxisomes by dephosphorylating peroxisomal beta-oxidation-related proteins. Acts as a negative regulator of abscisic acid (ABA) signaling. May regulate ABA-dependent gene expression. Involved in the light-dependent activation of nitrate reductase. The protein is Serine/threonine-protein phosphatase PP2A-2 catalytic subunit of Arabidopsis thaliana (Mouse-ear cress).